The sequence spans 392 residues: Phosphoglycerate kinase (392 aa).

Substrate contacts are provided by residues 21 to 23, arginine 36, 59 to 62, arginine 114, and arginine 147; these read DMN and HLGR. Residues lysine 198, glutamate 320, and 346 to 349 each bind ATP; that span reads GGDT.

This sequence belongs to the phosphoglycerate kinase family. As to quaternary structure, monomer.

It is found in the cytoplasm. The enzyme catalyses (2R)-3-phosphoglycerate + ATP = (2R)-3-phospho-glyceroyl phosphate + ADP. It participates in carbohydrate degradation; glycolysis; pyruvate from D-glyceraldehyde 3-phosphate: step 2/5. In Neisseria meningitidis serogroup A / serotype 4A (strain DSM 15465 / Z2491), this protein is Phosphoglycerate kinase.